A 172-amino-acid chain; its full sequence is MIDRDGYRPNVGIILCNARNQVFWGKRIREHSWQFPQGGIKYGESPEQAMYRELMEEVGLRPEHVKILGRTRDWLRYDVPTNWIKREWRGSYRGQKQIWFLLRLIGRDSDVSLRASTHPEFDAWRWSDYWVAMDSVIEFKRDVYRMALKELSMHLTEHRRPRVAERVDQLVR.

The region spanning 6 to 149 (GYRPNVGIIL…KRDVYRMALK (144 aa)) is the Nudix hydrolase domain. The short motif at 38-59 (GGIKYGESPEQAMYRELMEEVG) is the Nudix box element.

This sequence belongs to the Nudix hydrolase family. RppH subfamily. The cofactor is a divalent metal cation.

In terms of biological role, accelerates the degradation of transcripts by removing pyrophosphate from the 5'-end of triphosphorylated RNA, leading to a more labile monophosphorylated state that can stimulate subsequent ribonuclease cleavage. This is RNA pyrophosphohydrolase from Methylobacillus flagellatus (strain ATCC 51484 / DSM 6875 / VKM B-1610 / KT).